An 82-amino-acid polypeptide reads, in one-letter code: Cytochrome b559 subunit alpha (82 aa).

Residues Val-22–Trp-36 form a helical membrane-spanning segment. Position 24 (His-24) interacts with heme.

It belongs to the PsbE/PsbF family. As to quaternary structure, heterodimer of an alpha subunit and a beta subunit. PSII is composed of 1 copy each of membrane proteins PsbA, PsbB, PsbC, PsbD, PsbE, PsbF, PsbH, PsbI, PsbJ, PsbK, PsbL, PsbM, PsbT, PsbX, PsbY, PsbZ, Psb30/Ycf12, peripheral proteins PsbO, CyanoQ (PsbQ), PsbU, PsbV and a large number of cofactors. It forms dimeric complexes. The cofactor is heme b.

Its subcellular location is the cellular thylakoid membrane. This b-type cytochrome is tightly associated with the reaction center of photosystem II (PSII). PSII is a light-driven water:plastoquinone oxidoreductase that uses light energy to abstract electrons from H(2)O, generating O(2) and a proton gradient subsequently used for ATP formation. It consists of a core antenna complex that captures photons, and an electron transfer chain that converts photonic excitation into a charge separation. The polypeptide is Cytochrome b559 subunit alpha (Trichodesmium erythraeum (strain IMS101)).